The sequence spans 887 residues: PAN2-PAN3 deadenylation complex subunit PAN3 (887 aa).

A C3H1-type zinc finger spans residues 43-71 (GVKLKYCRYYAKDKTCFYGEECQFLHEDP). Disordered regions lie at residues 102 to 147 (AVAG…IPGM), 284 to 307 (QTPN…SNVS), and 325 to 392 (SPAT…SGQV). A compositionally biased stretch (gly residues) spans 122–138 (PGTGAAAGGGGSSGGLD). The tract at residues 147–498 (MDGGALTDTS…PPPNRIQKSS (352 aa)) is necessary and sufficient for interaction with PABPC1 but not needed for interaction with PAN2. A PABPC-interacting motif-2 (PAM-2) motif is present at residues 284–299 (QTPNPTASEFIPKGGS). The segment covering 298–307 (GSTSRLSNVS) has biased composition (polar residues). 2 positions are modified to phosphoserine: S354 and S361. Over residues 363–392 (TPNPASYMVPSSASTSVNNPVSQTPSSGQV) the composition is skewed to polar residues. A pseudokinase domain region spans residues 463-750 (QIDQADMPAV…SVNDIMPMIG (288 aa)). ATP is bound by residues R521, 570-577 (DFHAGGET), and 644-645 (TK). A coiled-coil region spans residues 751–789 (ARFYTQLDAAQMRNDVIEEDLAKEVQNGRLFRLLAKLGT). A knob domain region spans residues 790–887 (INERPEFQKD…ELIAAANGQL (98 aa)).

Belongs to the protein kinase superfamily. PAN3 family. Homodimer. Forms a heterotrimer with a catalytic subunit PAN2 to form the poly(A)-nuclease (PAN) deadenylation complex. Interacts (via PAM-2 motif) with poly(A)-binding protein PABPC1 (via PABC domain), conferring substrate specificity of the enzyme complex. Interacts with the GW182 family proteins TNRC6A, TNRC6B and TNRC6. Interacts with YTHDF3. In terms of assembly, interacts with PAN2. Interacts (via N-terminus) with PABPC1 at lower efficiency than isoform 3. As to quaternary structure, interacts with PAN2. Interacts (via N-terminus) with PABPC1 at higher efficiency than isoform 1.

The protein resides in the cytoplasm. Its subcellular location is the P-body. It is found in the nucleus. Regulatory subunit of the poly(A)-nuclease (PAN) deadenylation complex, one of two cytoplasmic mRNA deadenylases involved in general and miRNA-mediated mRNA turnover. PAN specifically shortens poly(A) tails of RNA and the activity is stimulated by poly(A)-binding protein (PABP). PAN deadenylation is followed by rapid degradation of the shortened mRNA tails by the CCR4-NOT complex. Deadenylated mRNAs are then degraded by two alternative mechanisms, namely exosome-mediated 3'-5' exonucleolytic degradation, or deadenylation-dependent mRNA decapping and subsequent 5'-3' exonucleolytic degradation by XRN1. PAN3 acts as a regulator for PAN activity, recruiting the catalytic subunit PAN2 to mRNA via its interaction with RNA and PABP, and to miRNA targets via its interaction with GW182 family proteins. Its function is as follows. Decreases PAN2-mediated deadenylation, possibly by preventing progression into the second CCR4-NOT mediated stage of biphasic deadenylation. Has a significant effect on mRNA stability, generally stabilizing a subset of the transcriptome. Stabilizes mRNAs degraded by the AU-rich element (ARE)-mediated mRNA decay pathway but promotes degradation of mRNAs by the microRNA-mediated pathway. Its activity influences mRNP remodeling, specifically reducing formation of a subset of P-bodies containing GW220, an isoform of TNRC6A. Functionally, enhances PAN2 deadenylase activity and has an extensive effect on mRNA stability, generally enhancing mRNA decay across the transcriptome by multiple pathways, including the AU-rich element (ARE)-mediated pathway, microRNA-mediated pathway and the nonsense-mediated pathway (NMD). Its activity is required for efficient P-body formation. May be involved in regulating mRNAs of genes involved in cell cycle progression and cell proliferation. The chain is PAN2-PAN3 deadenylation complex subunit PAN3 from Homo sapiens (Human).